The following is a 410-amino-acid chain: Mannosyl phosphorylinositol ceramide synthase regulatory protein CSG2 (410 aa).

Positions 1-17 (MSTTLLWFSSVIGYVIQ) are cleaved as a signal peptide. Residues 18 to 50 (TKCLSNIQSKKEISVGPNGTIATPETNGDNGNS) lie on the Lumenal side of the membrane. 2 N-linked (GlcNAc...) asparagine glycosylation sites follow: N35 and N49. The helical transmembrane segment at 51-71 (SSLTFYLTFMYFASWLLLVPA) threads the bilayer. The Cytoplasmic segment spans residues 72–141 (SRLWEKMRPM…SVATFKYVAK (70 aa)). The helical transmembrane segment at 142 to 161 (LTVLALIMIVADLTYNMALS) threads the bilayer. Residues 162–167 (LSPAFD) are Lumenal-facing. The helical transmembrane segment at 168 to 187 (VALMQNTAIFEIVTLLYGVC) threads the bilayer. At 188-197 (GISRKNYVFR) the chain is on the cytoplasmic side. The chain crosses the membrane as a helical span at residues 198–217 (NFLIMMNAVIGILIISYTKA). At 218–245 (TCDMLAGKLSVNPNTGELSDPFLFDRLK) the chain is on the lumenal side. Residues 246–265 (GALICGLGALIMGPFAVLWN) traverse the membrane as a helical segment. The Cytoplasmic segment spans residues 266–285 (RWFCSNISKNENSAVVLVKQ). A helical membrane pass occupies residues 286 to 305 (STHMALIGIIGMVILLPFIP). Topologically, residues 306–324 (KFPSRESVESISLFYNDKS) are lumenal. The helical transmembrane segment at 325–344 (FWFSLLGSIIFGSLPSLISI) threads the bilayer. Topologically, residues 345 to 355 (LELNRKAPAEY) are cytoplasmic. The chain crosses the membrane as a helical span at residues 356 to 374 (LTTCNLGAIIFMGLAEWVC). Residues 375–385 (EPTQTTIVRWE) are Lumenal-facing. Residues 386 to 404 (VIGYIMLTVSLLVLSVTLG) traverse the membrane as a helical segment. Topologically, residues 405 to 410 (EGKYHH) are cytoplasmic.

In terms of assembly, heterodimer of CSH1 and CSG2, and SUR1 and CSG2.

The protein resides in the endoplasmic reticulum membrane. Functionally, required for calcium regulation. May regulate calcium accumulation by a non-vacuole organelle. Also regulates the activity of CSH1 and SUR1 during mannosyl phosphorylinositol ceramide synthesis. This is Mannosyl phosphorylinositol ceramide synthase regulatory protein CSG2 (CSG2) from Saccharomyces cerevisiae (strain ATCC 204508 / S288c) (Baker's yeast).